Reading from the N-terminus, the 514-residue chain is 2,3-bisphosphoglycerate-independent phosphoglycerate mutase (514 aa).

Positions 14 and 64 each coordinate Mn(2+). The Phosphoserine intermediate role is filled by S64. Substrate contacts are provided by residues H125, 155–156, R187, R193, 263–266, and K336; these read RD and RADR. 5 residues coordinate Mn(2+): D403, H407, D444, H445, and H463.

It belongs to the BPG-independent phosphoglycerate mutase family. As to quaternary structure, monomer. Requires Mn(2+) as cofactor.

It catalyses the reaction (2R)-2-phosphoglycerate = (2R)-3-phosphoglycerate. Its pathway is carbohydrate degradation; glycolysis; pyruvate from D-glyceraldehyde 3-phosphate: step 3/5. Functionally, catalyzes the interconversion of 2-phosphoglycerate and 3-phosphoglycerate. This Escherichia coli (strain ATCC 8739 / DSM 1576 / NBRC 3972 / NCIMB 8545 / WDCM 00012 / Crooks) protein is 2,3-bisphosphoglycerate-independent phosphoglycerate mutase.